The sequence spans 658 residues: Translation factor GUF1, mitochondrial (658 aa).

A mitochondrion-targeting transit peptide spans M1–N40. Positions D60–V240 constitute a tr-type G domain. GTP contacts are provided by residues A69 to S76, D133 to H137, and N187 to D190.

It belongs to the TRAFAC class translation factor GTPase superfamily. Classic translation factor GTPase family. LepA subfamily.

The protein localises to the mitochondrion inner membrane. It carries out the reaction GTP + H2O = GDP + phosphate + H(+). Promotes mitochondrial protein synthesis. May act as a fidelity factor of the translation reaction, by catalyzing a one-codon backward translocation of tRNAs on improperly translocated ribosomes. Binds to mitochondrial ribosomes in a GTP-dependent manner. This chain is Translation factor GUF1, mitochondrial, found in Paracoccidioides brasiliensis (strain Pb18).